The following is a 442-amino-acid chain: MELPQMPELMGLSLLVGLLALVATAAVARGWLRAEEKPSQPVCQKENEPKKSGSKKQKQNQRVRKEKPQQHSFTHPLLAAALKSHSGNISCMDFSSNGKYLATCADDRTVRIWSTKDFLQREHRSMRANVELDHATLVRFSPDCRAFIVWLANGDTLRVFKMTKREDGGFTFTATPEDFPKKHKAPIINIGIADTGKFIMTASSDTTVLIWNLKGQVLSTINTNQMNNSHAVISPCSRFVGSCGFTPDVKVWEVCFGKKGEFQEVLRAFELKGHSASVHSFAFSNDSRRMASVSKDGTWKLWDTDVEYKKQQDPYLLRTGRFEEASTMPCRLALSPDTHVLALATGTNIHLFNTRRGEKEEYFECVHGECIADLTFDITGRFLASCGDRAVRLFHNTPGHRAVVEEMQSLLKRASSESTRQRLQQQLTQAQEALKSLGALKK.

Residues 36 to 71 form a disordered region; it reads EKPSQPVCQKENEPKKSGSKKQKQNQRVRKEKPQQH. Positions 52 to 65 are enriched in basic residues; the sequence is SGSKKQKQNQRVRK. WD repeat units follow at residues 84 to 123, 130 to 170, 182 to 222, 224 to 263, 273 to 312, 323 to 362, and 366 to 404; these read SHSG…QREH, VELD…DGGF, KHKA…STIN, NQMN…GEFQ, GHSA…KKQQ, EEAS…KEEY, and VHGE…RAVV. A Glycyl lysine isopeptide (Lys-Gly) (interchain with G-Cter in SUMO2) cross-link involves residue Lys164. Thr428 is subject to Phosphothreonine.

This is Transducin beta-like protein 2 (Tbl2) from Mus musculus (Mouse).